Reading from the N-terminus, the 159-residue chain is Phosphopantetheine adenylyltransferase (159 aa).

Position 9 (Ser-9) interacts with substrate. Residues Ser-9–Phe-10 and His-17 each bind ATP. Residues Lys-41, Ile-75, and Lys-89 each contribute to the substrate site. Residues Gly-90 to Arg-92, Glu-100, and Leu-124 to Ser-130 contribute to the ATP site.

Belongs to the bacterial CoaD family. As to quaternary structure, homohexamer. The cofactor is Mg(2+).

Its subcellular location is the cytoplasm. The enzyme catalyses (R)-4'-phosphopantetheine + ATP + H(+) = 3'-dephospho-CoA + diphosphate. The protein operates within cofactor biosynthesis; coenzyme A biosynthesis; CoA from (R)-pantothenate: step 4/5. Its function is as follows. Reversibly transfers an adenylyl group from ATP to 4'-phosphopantetheine, yielding dephospho-CoA (dPCoA) and pyrophosphate. This is Phosphopantetheine adenylyltransferase from Bifidobacterium animalis subsp. lactis (strain AD011).